The primary structure comprises 155 residues: Ribosomal RNA large subunit methyltransferase H (155 aa).

Gly-103 is a binding site for S-adenosyl-L-methionine.

Belongs to the RNA methyltransferase RlmH family. Homodimer.

The protein resides in the cytoplasm. The enzyme catalyses pseudouridine(1915) in 23S rRNA + S-adenosyl-L-methionine = N(3)-methylpseudouridine(1915) in 23S rRNA + S-adenosyl-L-homocysteine + H(+). In terms of biological role, specifically methylates the pseudouridine at position 1915 (m3Psi1915) in 23S rRNA. The sequence is that of Ribosomal RNA large subunit methyltransferase H from Caulobacter vibrioides (strain ATCC 19089 / CIP 103742 / CB 15) (Caulobacter crescentus).